Here is a 65-residue protein sequence, read N- to C-terminus: Ferredoxin-1 (65 aa).

One can recognise a 4Fe-4S ferredoxin-type domain in the interval 2–30; sequence AMKIDPELCTSCGDCEPVCPTNAIAPKKG. 8 residues coordinate [4Fe-4S] cluster: Cys-10, Cys-13, Cys-16, Cys-20, Cys-39, Cys-42, Cys-51, and Cys-55.

Requires [4Fe-4S] cluster as cofactor.

Functionally, ferredoxins are iron-sulfur proteins that transfer electrons in a wide variety of metabolic reactions. This ferredoxin probably participates in nitrogen fixation. This Rhodobacter capsulatus (Rhodopseudomonas capsulata) protein is Ferredoxin-1 (fdxN).